The following is a 424-amino-acid chain: Arogenate dehydratase 1 (424 aa).

The N-terminal 52 residues, M1–P52, are a transit peptide targeting the chloroplast. In terms of domain architecture, Prephenate dehydratase spans R131–R308. Residues T321–P412 form the ACT domain.

In terms of tissue distribution, mostly expressed in flowers, especially in petals (corollas and tubes), and, at low levels, in roots, stems, leaves, pistils, stamens, ovaries and sepals.

The protein localises to the plastid. It is found in the chloroplast stroma. It catalyses the reaction L-arogenate + H(+) = L-phenylalanine + CO2 + H2O. Its pathway is amino-acid biosynthesis; L-phenylalanine biosynthesis; L-phenylalanine from L-arogenate: step 1/1. Functionally, converts L-arogenate produced from the shikimate-chorismate pathway into phenylalanine (Phe). Involved in floral volatile benzenoids and phenylpropanoids (FVBP) production. In Petunia hybrida (Petunia), this protein is Arogenate dehydratase 1.